The following is a 46-amino-acid chain: L-amino-acid oxidase (46 aa).

Asparagine 31 carries N-linked (GlcNAc...) asparagine glycosylation.

This sequence belongs to the flavin monoamine oxidase family. FIG1 subfamily. FAD serves as cofactor.

It is found in the secreted. It localises to the lysosome. The protein localises to the cytoplasmic vesicle. The protein resides in the secretory vesicle. Its subcellular location is the acrosome. The catalysed reaction is an L-alpha-amino acid + O2 + H2O = a 2-oxocarboxylate + H2O2 + NH4(+). The enzyme catalyses L-tryptophan + O2 + H2O = indole-3-pyruvate + H2O2 + NH4(+). It catalyses the reaction L-phenylalanine + O2 + H2O = 3-phenylpyruvate + H2O2 + NH4(+). It carries out the reaction L-tyrosine + O2 + H2O = 3-(4-hydroxyphenyl)pyruvate + H2O2 + NH4(+). The catalysed reaction is L-arginine + O2 + H2O = 5-guanidino-2-oxopentanoate + H2O2 + NH4(+). Its pathway is amino-acid degradation; L-tryptophan degradation via pyruvate pathway. Its function is as follows. Secreted L-amino-acid oxidase that acts as a key immunoregulator. Has preference for L-aromatic amino acids: converts phenylalanine (Phe), tyrosine (Tyr) and tryptophan (Trp) to phenylpyruvic acid (PP), hydroxyphenylpyruvic acid (HPP), and indole-3-pyruvic acid (I3P), respectively. Also has weak L-arginine oxidase activity. Acts as a negative regulator of anti-tumor immunity by mediating Trp degradation via an indole pyruvate pathway that activates the transcription factor AHR. IL4I1-mediated Trp catabolism generates I3P, giving rise to indole metabolites (indole-3-acetic acid (IAA) and indole-3-aldehyde (I3A)) and kynurenic acid, which act as ligands for AHR, a ligand-activated transcription factor that plays important roles in immunity and cancer. AHR activation by indoles following IL4I1-mediated Trp degradation enhances tumor progression by promoting cancer cell motility and suppressing adaptive immunity. Also has an immunoregulatory function in some immune cells, probably by mediating Trp degradation and promoting downstream AHR activation: inhibits T-cell activation and proliferation, promotes the differentiation of naive CD4(+) T-cells into FOXP3(+) regulatory T-cells (Treg) and regulates the development and function of B-cells. Also regulates M2 macrophage polarization by inhibiting T-cell activation. Also has antibacterial properties by inhibiting growth of Gram negative and Gram positive bacteria through the production of NH4(+) and H2O2. The chain is L-amino-acid oxidase from Mus spretus (Western Mediterranean mouse).